A 943-amino-acid chain; its full sequence is Lactoferrin-binding protein A (943 aa).

A signal peptide spans Met-1–Ala-27. In terms of domain architecture, TBDR plug spans Arg-52–Lys-178. Residues Ser-189–Phe-943 enclose the TBDR beta-barrel domain. The short motif at Gly-926 to Phe-943 is the TonB C-terminal box element.

The protein belongs to the TonB-dependent receptor family.

The protein resides in the cell outer membrane. Unknown. May be an iron-siderophore receptor. In Neisseria meningitidis serogroup B (strain ATCC BAA-335 / MC58), this protein is Lactoferrin-binding protein A (lbpA).